Here is a 108-residue protein sequence, read N- to C-terminus: Peptidyl-prolyl cis-trans isomerase FKBP1B (108 aa).

The PPIase FKBP-type domain maps to 20 to 108; sequence GQICVVHYTG…IFDVELLSLE (89 aa).

Belongs to the FKBP-type PPIase family. FKBP1 subfamily. Identified in a complex composed of RYR2, FKBP1B, PKA catalytic subunit, PRKAR2A, AKAP6, and the protein phosphatases PP2A and PP1. Interacts directly with RYR2.

Its subcellular location is the cytoplasm. The protein localises to the sarcoplasmic reticulum. The catalysed reaction is [protein]-peptidylproline (omega=180) = [protein]-peptidylproline (omega=0). Its activity is regulated as follows. Inhibited by both FK506 and rapamycin. Its function is as follows. Has the potential to contribute to the immunosuppressive and toxic effects of FK506 and rapamycin. PPIases accelerate the folding of proteins. It catalyzes the cis-trans isomerization of proline imidic peptide bonds in oligopeptides. This chain is Peptidyl-prolyl cis-trans isomerase FKBP1B (Fkbp1b), found in Mus musculus (Mouse).